Here is a 631-residue protein sequence, read N- to C-terminus: ATP-dependent protease PrkA (631 aa).

Position 217 is a phosphothreonine (T217). S219 carries the phosphoserine modification.

Belongs to the PrkA family. Post-translationally, phosphorylated by PrkC on two sites, Thr-217 and Ser-219, with the threonine being the major site of modification.

Its subcellular location is the forespore. It localises to the spore coat. It carries out the reaction Hydrolysis of proteins in presence of ATP.. With respect to regulation, hydrolase activity is regulated by phosphorylation by the Ser/Thr kinase PrkC, probably allowing fine control of sporulation. Phosphorylation by PrkC does not prevent ATP fixation but it inhibits specifically PrkA protease activity and down-regulates the sporulation processes. Hydrolase activity is inhibited by a protease inhibitor, phenylmethylsulfonyl fluoride (PMSF). Potential kinase activity requires the presence of MgCl(2) and is inhibited in the presence of MnCl(2). In terms of biological role, ATP-dependent protease that regulates sporulation. Is able to bind and hydrolyze ATP. This ATP-dependent protease activity is necessary for efficient sporulation of B.subtilis. In vitro, can hydrolyze alpha-casein, an exogenous substrate of Lon proteases, in an ATP-dependent manner. PrkA also modulates sporulation by negatively regulating the transcriptional regulator Hpr/ScoC to induce the expression of sigK. The control of sporulation mediated via the Hpr/ScoC regulator is probably indirect. PrkA was originally thought to be a protein kinase, as it has been shown to phosphorylate in vitro an unidentified 60 kDa protein from B.subtilis crude extracts at a serine residue. However, Zhang et al. did not observe autophosphorylation or kinase activity for this protein, suggesting that it may have lost its kinase activity during evolution or may be a pseudokinase. In Bacillus subtilis (strain 168), this protein is ATP-dependent protease PrkA.